Consider the following 90-residue polypeptide: Neurotoxin LmNaTx19 (90 aa).

The first 19 residues, 1–19 (MNHLILIVAMCLMVIGVQC), serve as a signal peptide directing secretion. Residues 21–80 (KDGYLYDDVDCKFSCWDNEYCRKLCKSKKAVGGYCWRWRFSCYCTGLPDNEKTEGTYKCG) enclose the LCN-type CS-alpha/beta domain. Disulfide bonds link Cys31/Cys79, Cys35/Cys55, Cys41/Cys62, and Cys45/Cys64.

This sequence belongs to the long (4 C-C) scorpion toxin superfamily. Sodium channel inhibitor family. Alpha subfamily. As to expression, expressed by the venom gland.

Its subcellular location is the secreted. In terms of biological role, binds voltage-independently at site-3 of voltage-gated sodium channels (Nav) and inhibits the inactivation of the activated channels, thereby blocking neuronal transmission. The chain is Neurotoxin LmNaTx19 from Lychas mucronatus (Chinese swimming scorpion).